We begin with the raw amino-acid sequence, 164 residues long: Ubiquitin-fold modifier-conjugating enzyme 1 (164 aa).

The active-site Glycyl thioester intermediate is the C116.

Belongs to the ubiquitin-conjugating enzyme family. UFC1 subfamily.

In terms of biological role, E2-like enzyme which forms an intermediate with UFM1 via a thioester linkage. In Drosophila erecta (Fruit fly), this protein is Ubiquitin-fold modifier-conjugating enzyme 1.